The primary structure comprises 356 residues: GTPase Obg (356 aa).

An Obg domain is found at 1–159 (MKFLDEAKVY…RWIWLRMKLI (159 aa)). In terms of domain architecture, OBG-type G spans 160–327 (ADAGLVGLPN…VLRALTDVIS (168 aa)). GTP is bound by residues 166 to 173 (GLPNAGKS), 191 to 195 (FTTLH), 212 to 215 (DIPG), 279 to 282 (NKID), and 308 to 310 (SGV). 2 residues coordinate Mg(2+): serine 173 and threonine 193. The disordered stretch occupies residues 329 to 356 (APVSTKAKGEPTENETPPPSTGWSPLSN).

Belongs to the TRAFAC class OBG-HflX-like GTPase superfamily. OBG GTPase family. As to quaternary structure, monomer. Requires Mg(2+) as cofactor.

The protein resides in the cytoplasm. Functionally, an essential GTPase which binds GTP, GDP and possibly (p)ppGpp with moderate affinity, with high nucleotide exchange rates and a fairly low GTP hydrolysis rate. Plays a role in control of the cell cycle, stress response, ribosome biogenesis and in those bacteria that undergo differentiation, in morphogenesis control. The protein is GTPase Obg of Afipia carboxidovorans (strain ATCC 49405 / DSM 1227 / KCTC 32145 / OM5) (Oligotropha carboxidovorans).